We begin with the raw amino-acid sequence, 141 residues long: Galactose-6-phosphate isomerase subunit LacA 1 (141 aa).

The protein belongs to the LacAB/RpiB family. In terms of assembly, heteromultimeric protein consisting of LacA and LacB.

The catalysed reaction is aldehydo-D-galactose 6-phosphate = keto-D-tagatose 6-phosphate. It participates in carbohydrate metabolism; D-galactose 6-phosphate degradation; D-tagatose 6-phosphate from D-galactose 6-phosphate: step 1/1. This Streptococcus pyogenes serotype M1 protein is Galactose-6-phosphate isomerase subunit LacA 1.